The following is a 1266-amino-acid chain: Formin-like protein 13 (1266 aa).

The region spanning 9 to 193 (YRKPPDGLLE…QYVSRRNLVS (185 aa)) is the Phosphatase tensin-type domain. Cys-126 (phosphocysteine intermediate) is an active-site residue. In terms of domain architecture, C2 tensin-type spans 199–337 (DRALTMDCVI…FRVELLFSDM (139 aa)). 4 disordered regions span residues 497–568 (KPLV…LQHS), 597–825 (KNLI…GKGR), 881–902 (SASAPEQAGKSRLDSSRGPKPE), and 1210–1266 (QLEA…RTAP). The span at 529–538 (PPTPSPPHPV) shows a compositional bias: pro residues. The span at 617-644 (EPSSKTTNSLLLSPQASPATPTNPSKTV) shows a compositional bias: polar residues. 4 stretches are compositionally biased toward pro residues: residues 686 to 698 (LPRPPPPPPPPPM), 706 to 742 (VPPPPPPAPPAPPTPIVHTSSPPPPPPPPPPPAPPTP), 754 to 781 (PPAPPAPPRLPTHSASPPPPTAPPPPPL), and 806 to 815 (PNVPPTPALP). In terms of domain architecture, FH2 spans 829–1226 (VNLKNSPAKK…KNAAEKEKPK (398 aa)). Basic and acidic residues-rich tracts occupy residues 889–902 (GKSRLDSSRGPKPE), 1210–1248 (QLEAEAKKNAAEKEKPKTGGLDTEIKKPLNEEVKEEKTK), and 1255–1266 (EMSDRLKERTAP).

This sequence belongs to the formin-like family. Class-II subfamily.

This chain is Formin-like protein 13 (FH13), found in Arabidopsis thaliana (Mouse-ear cress).